The following is a 175-amino-acid chain: Viral interleukin-10 homolog (175 aa).

The N-terminal stretch at 1–19 is a signal peptide; sequence MLSVMVSSSLVLIVFFLGA. 2 cysteine pairs are disulfide-bonded: Cys-37–Cys-127 and Cys-81–Cys-132. N-linked (GlcNAc...) asparagine; by host glycosylation occurs at Asn-151.

Belongs to the IL-10 family. As to quaternary structure, homodimer; disulfide-linked.

The protein resides in the secreted. In terms of biological role, functional viral IL-10 homolog. Can bind to the human IL-10 receptor and compete with human IL-10 for binding sites. Requires both subunits of the human IL-10 receptor complex to induce signal transduction events and biological activities. IL-10 signaling pathway has several immunosuppressive activities that are exploited by the virus. Inhibits TLR-induced type I interferon production in host plasmacytoid dendritic cells. The chain is Viral interleukin-10 homolog (UL111A) from Human cytomegalovirus (strain AD169) (HHV-5).